Consider the following 267-residue polypeptide: MLNTLWEIREKVRDLSPLVVNLTNNVVTNFTANVLLAAGASPIMSEGVEEADDLVKIANAVVINIGTLHSRQVEYFKKAVYLANKYQKPLLLDPVGLGATTYRNETTFELLNSGNFTLIRGNYGEISFLAGNSAQVKGVDSQTSDFAAENLTEVAKRYKTVVVATGPVDYVIAEGELYLNRTGDIMLQKVTGTGCALTSLIGAFVGVIDEPALAALAALAFYGAASEKARKISAGPGSFLVNFIDSLYNLTKEEFLELTTEKVQGLR.

Residue methionine 44 coordinates substrate. ATP is bound by residues arginine 120 and threonine 165. Glycine 192 is a binding site for substrate.

It belongs to the Thz kinase family. The cofactor is Mg(2+).

It catalyses the reaction 5-(2-hydroxyethyl)-4-methylthiazole + ATP = 4-methyl-5-(2-phosphooxyethyl)-thiazole + ADP + H(+). It functions in the pathway cofactor biosynthesis; thiamine diphosphate biosynthesis; 4-methyl-5-(2-phosphoethyl)-thiazole from 5-(2-hydroxyethyl)-4-methylthiazole: step 1/1. Functionally, catalyzes the phosphorylation of the hydroxyl group of 4-methyl-5-beta-hydroxyethylthiazole (THZ). The chain is Hydroxyethylthiazole kinase from Carboxydothermus hydrogenoformans (strain ATCC BAA-161 / DSM 6008 / Z-2901).